The following is a 276-amino-acid chain: Pantothenate synthetase (276 aa).

Position 27-34 (27-34) interacts with ATP; the sequence is MGALHRGH. The active-site Proton donor is the histidine 34. Residue glutamine 58 coordinates (R)-pantoate. Glutamine 58 lines the beta-alanine pocket. 147 to 150 is an ATP binding site; it reads GKKD. Glutamine 153 is a binding site for (R)-pantoate. Residues valine 176 and 184–187 each bind ATP; that span reads LSSR.

The protein belongs to the pantothenate synthetase family. In terms of assembly, homodimer.

Its subcellular location is the cytoplasm. The catalysed reaction is (R)-pantoate + beta-alanine + ATP = (R)-pantothenate + AMP + diphosphate + H(+). It functions in the pathway cofactor biosynthesis; (R)-pantothenate biosynthesis; (R)-pantothenate from (R)-pantoate and beta-alanine: step 1/1. In terms of biological role, catalyzes the condensation of pantoate with beta-alanine in an ATP-dependent reaction via a pantoyl-adenylate intermediate. In Helicobacter pylori (strain G27), this protein is Pantothenate synthetase.